We begin with the raw amino-acid sequence, 198 residues long: Cyclin-dependent kinase inhibitor 1B (198 aa).

Polar residues predominate over residues 1–11; that stretch reads MSNVRVSNGSP. The segment at 1 to 34 is disordered; the sequence is MSNVRVSNGSPSLERMDARQAEHPKPSACRNLFG. The residue at position 10 (Ser10) is a Phosphoserine; by UHMK1. The span at 14–25 shows a compositional bias: basic and acidic residues; it reads ERMDARQAEHPK. Residues 51-91 form an interaction with CDK2 region; it reads DMEEASQRKWNFDFQNHNPLEGRYQWQEVDKGSLPEFYYRP. Phosphotyrosine; by SRC is present on Tyr74. The interval 85–198 is disordered; sequence PEFYYRPPRP…KKPGLRRHQT (114 aa). A Phosphotyrosine; by ABL, LYN and SRC modification is found at Tyr88. Phosphotyrosine is present on Tyr89. The span at 104–124 shows a compositional bias: polar residues; sequence QESQDVSGSRQAVPSIGSQAY. Residues 153-169 carry the Nuclear localization signal motif; sequence KRPAADDSSSQNKRANR. Thr170 carries the phosphothreonine modification. Over residues 175–186 the composition is skewed to polar residues; sequence SDGSLNAGSVEQ. A Phosphothreonine; by PKB/AKT1, CDK1 and CDK2 modification is found at Thr187. Thr198 is subject to Phosphothreonine; by CaMK1, PKB/AKT1, RPS6KA1, RPS6KA3 and PIM1.

The protein belongs to the CDI family. As to quaternary structure, forms a ternary complex composed of CCNE1, CDK2 and CDKN1B. Interacts directly with CCNE1; the interaction is inhibited by CDK2-dependent phosphorylation on Thr-187. Interacts with COPS5, subunit of the COP9 signalosome complex; the interaction leads to CDKN1B degradation. Interacts with NUP50; the interaction leads to nuclear import and degradation of phosphorylated CDKN1B. Interacts with CCND1 and SNX6. Interacts (Thr-198-phosphorylated form) with 14-3-3 proteins, binds strongly YWHAQ, weakly YWHAE and YWHAH, but not YWHAB nor YWHAZ; the interaction with YWHAQ results in translocation to the cytoplasm. Interacts with AKT1 and LYN; the interactions lead to cytoplasmic mislocation, phosphorylation of CDKN1B and inhibition of cell cycle arrest. Forms a ternary complex with CCNA2 and CDK2; CDKN1B inhibits the kinase activity of CDK2 through conformational rearrangements. Interacts (unphosphorylated form) with CDK2. Forms a complex with CDK2 and SPDYA, but does not directly interact with SPDYA. Forms a ternary complex composed of cyclin D, CDK4 and CDKN1B. Interacts (phosphorylated on Tyr-88 and Tyr-89) with CDK4; the interaction is required for cyclin D and CDK4 complex assembly, induces nuclear translocation and activates the CDK4 kinase activity. Interacts with GRB2. Interacts with PIM1. Identified in a complex with SKP1, SKP2 and CKS1B. Interacts with UHMK1; the interaction leads to cytoplasmic mislocation, phosphorylation of CDKN1B and inhibition of cell cycle arrest. Also interacts with CDK1. Dephosphorylated on Thr-187 by PPM1H, leading to CDKN1B stability. Phosphorylated; phosphorylation occurs on serine, threonine and tyrosine residues. Phosphorylation on Ser-10 is the major site of phosphorylation in resting cells, takes place at the G(0)-G(1) phase and leads to protein stability. Phosphorylation on other sites is greatly enhanced by mitogens, growth factors, cMYC and in certain cancer cell lines. The phosphorylated form found in the cytoplasm is inactivate. Phosphorylation on Thr-198 is required for interaction with 14-3-3 proteins. Phosphorylation on Thr-187, by CDK1 and CDK2 leads to protein ubiquitination and proteasomal degradation. Tyrosine phosphorylation promotes this process. Phosphorylation by PKB/AKT1 can be suppressed by LY294002, an inhibitor of the catalytic subunit of PI3K. Phosphorylation on Tyr-88 and Tyr-89 has no effect on binding CDK2, but is required for binding CDK4. Dephosphorylated on tyrosine residues by G-CSF. Dephosphorylated on Thr-187 by PPM1H, leading to CDKN1B stability. In terms of processing, ubiquitinated; in the cytoplasm by the KPC complex (composed of RNF123/KPC1 and UBAC1/KPC2) and, in the nucleus, by SCF(SKP2). The latter requires prior phosphorylation on Thr-187. Ubiquitinated; by a TRIM21-containing SCF(SKP2)-like complex; leads to its degradation. Post-translationally, subject to degradation in the lysosome. Interaction with SNX6 promotes lysosomal degradation.

The protein resides in the nucleus. It localises to the cytoplasm. Its subcellular location is the endosome. Its function is as follows. Important regulator of cell cycle progression. Inhibits the kinase activity of CDK2 bound to cyclin A, but has little inhibitory activity on CDK2 bound to SPDYA. Involved in G1 arrest. Potent inhibitor of cyclin E- and cyclin A-CDK2 complexes. Forms a complex with cyclin type D-CDK4 complexes and is involved in the assembly, stability, and modulation of CCND1-CDK4 complex activation. Acts either as an inhibitor or an activator of cyclin type D-CDK4 complexes depending on its phosphorylation state and/or stoichometry. In Cricetulus griseus (Chinese hamster), this protein is Cyclin-dependent kinase inhibitor 1B (CDKN1B).